The primary structure comprises 601 residues: Glutamine--fructose-6-phosphate aminotransferase [isomerizing] (601 aa).

Residue Cys-2 is the Nucleophile; for GATase activity of the active site. Positions 2-218 constitute a Glutamine amidotransferase type-2 domain; that stretch reads CGIVGYIGYD…DHEIVIVKKD (217 aa). SIS domains follow at residues 284–423 and 453–591; these read IIND…EHGR and IATD…VDKP. Catalysis depends on Lys-596, which acts as the For Fru-6P isomerization activity.

As to quaternary structure, homodimer.

The protein localises to the cytoplasm. It catalyses the reaction D-fructose 6-phosphate + L-glutamine = D-glucosamine 6-phosphate + L-glutamate. Catalyzes the first step in hexosamine metabolism, converting fructose-6P into glucosamine-6P using glutamine as a nitrogen source. The polypeptide is Glutamine--fructose-6-phosphate aminotransferase [isomerizing] (Staphylococcus aureus (strain Mu50 / ATCC 700699)).